A 436-amino-acid chain; its full sequence is 3-ketoacyl-CoA thiolase (436 aa).

The active-site Acyl-thioester intermediate is the Cys99. Residues His392 and Cys422 each act as proton acceptor in the active site.

The protein belongs to the thiolase-like superfamily. Thiolase family. As to quaternary structure, heterotetramer of two alpha chains (FadJ) and two beta chains (FadI).

It localises to the cytoplasm. It catalyses the reaction an acyl-CoA + acetyl-CoA = a 3-oxoacyl-CoA + CoA. It participates in lipid metabolism; fatty acid beta-oxidation. Functionally, catalyzes the final step of fatty acid oxidation in which acetyl-CoA is released and the CoA ester of a fatty acid two carbons shorter is formed. This is 3-ketoacyl-CoA thiolase from Photobacterium profundum (strain SS9).